The primary structure comprises 46 residues: Antimicrobial peptide eNAP-1 (46 aa).

2 disulfide bridges follow: C4–C16 and C10–C26.

It belongs to the granulin family.

It localises to the secreted. Its function is as follows. Has antimicrobial activity against Gram-negative and Gram-positive bacteria. In Equus caballus (Horse), this protein is Antimicrobial peptide eNAP-1.